Consider the following 250-residue polypeptide: Cyclopentanol dehydrogenase (250 aa).

Met-18, Asp-37, Asp-63, Val-64, Asn-90, Tyr-155, Lys-159, Ile-188, Thr-190, and Thr-193 together coordinate NAD(+). The Proton acceptor role is filled by Tyr-155.

The protein belongs to the short-chain dehydrogenases/reductases (SDR) family.

It carries out the reaction cyclopentanol + NAD(+) = cyclopentanone + NADH + H(+). The catalysed reaction is cyclohexanol + NAD(+) = cyclohexanone + NADH + H(+). It functions in the pathway alcohol metabolism; cyclopentanol degradation; 5-valerolactone from cyclopentanol: step 1/2. In terms of biological role, catalyzes the oxidation of cyclopentanol to cyclopentanone and cyclohexanol to cyclohexanone. The activity toward cyclohexanol is 60% that of cyclopentanol. The protein is Cyclopentanol dehydrogenase of Comamonas sp. (strain NCIMB 9872).